We begin with the raw amino-acid sequence, 520 residues long: MENIEKLLMQEKILMLELDLVRAKISLARANGSSQQGDLPLHRETPEKEEAVHSALATFTPTQVKAIPEQTAPGKESTNPLMASILPKDMNPVQTGIRLAVPGDFLRPHQGIPIPQKSELSSTVAPLRAESGIQHPHINYYVVYNGPHAGIYDDWGCTKAATNGVPGVAHKKFATITEARAAADAYTTSTQTDRLNFIPKGEAQLKPKSFAEALTSPPKQKAHWLTLGTKRPSSDPAPKEISFAPEITMDDFLYLYHLGRKFDGEGDDTIFTTDNEKISLFNFRKNADPQMVREAYAAGLIKTIYPSNNLQEIKYLPKKVKDAVKRFRTNCIKNTEKDIFLKIRSTIPVWTIQGLVHKPRQVIEIGVSKKVVPTESKAMESKIQIEDLTELAVKTGGQFIQSLLRLNDKKKIFVNMVEHDTLVYSKNIKDTVSEDQRAIETFQQRVISGNLLGFHCPSICHFMERTVEKEGGSYKVHHCDKGKAIVQDASADSGPKDGPPPTRSIVEKEDVPTTSSKQVD.

Residues 486-520 (VQDASADSGPKDGPPPTRSIVEKEDVPTTSSKQVD) form a disordered region.

This sequence belongs to the caulimoviridae viroplasmin family.

The protein localises to the host cytoplasm. In terms of biological role, enhances the ribosomal termination-reinitiation event leading to the translation of major open reading frames on the polycistronic viral RNAs. In Cauliflower mosaic virus (strain NY8153) (CaMV), this protein is Transactivator/viroplasmin protein.